A 217-amino-acid chain; its full sequence is GTP-binding protein Rit2 (217 aa).

GTP contacts are provided by residues 27 to 34, 74 to 78, and 133 to 136; these read GAGGVGKS, DTAGQ, and NKID.

The protein belongs to the small GTPase superfamily. Ras family. Interacts with AFDN, the C-terminal domain of RALGDS and RLF, but not with RIN1 and PIK3CA. RLF binds exclusively to the active GTP-bound form. Binds calmodulin. Interacts with PLXNB3.

The protein resides in the nucleus. It localises to the cell membrane. The catalysed reaction is GTP + H2O = GDP + phosphate + H(+). With respect to regulation, alternates between an inactive form bound to GDP and an active form bound to GTP. In terms of biological role, binds and exchanges GTP and GDP. This is GTP-binding protein Rit2 (Rit2) from Rattus norvegicus (Rat).